A 233-amino-acid chain; its full sequence is ATP-dependent dethiobiotin synthetase BioD (233 aa).

Position 12 to 17 (12 to 17 (EVGKTY)) interacts with ATP. Position 16 (Thr-16) interacts with Mg(2+). The active site involves Lys-37. ATP is bound by residues Asp-54, 120 to 123 (EGAG), and 186 to 187 (ND). The Mg(2+) site is built by Asp-54 and Glu-120.

The protein belongs to the dethiobiotin synthetase family. As to quaternary structure, homodimer. Requires Mg(2+) as cofactor.

It localises to the cytoplasm. The enzyme catalyses (7R,8S)-7,8-diammoniononanoate + CO2 + ATP = (4R,5S)-dethiobiotin + ADP + phosphate + 3 H(+). It participates in cofactor biosynthesis; biotin biosynthesis; biotin from 7,8-diaminononanoate: step 1/2. In terms of biological role, catalyzes a mechanistically unusual reaction, the ATP-dependent insertion of CO2 between the N7 and N8 nitrogen atoms of 7,8-diaminopelargonic acid (DAPA, also called 7,8-diammoniononanoate) to form a ureido ring. In Alteromonas mediterranea (strain DSM 17117 / CIP 110805 / LMG 28347 / Deep ecotype), this protein is ATP-dependent dethiobiotin synthetase BioD.